An 85-amino-acid chain; its full sequence is Large ribosomal subunit protein bL27 (85 aa).

The protein belongs to the bacterial ribosomal protein bL27 family.

The protein is Large ribosomal subunit protein bL27 of Stutzerimonas stutzeri (strain A1501) (Pseudomonas stutzeri).